A 325-amino-acid chain; its full sequence is NADH-quinone oxidoreductase subunit H (325 aa).

Helical transmembrane passes span 11–31 (ILLT…CGAF), 81–101 (VIFT…FAIV), 114–134 (IGIL…LFAG), 154–174 (LSYE…AGSF), 186–206 (VWNV…GVAV), 237–257 (FFVG…TLFF), 265–285 (LPPF…FILI), and 304–324 (ICLP…LWQA).

Belongs to the complex I subunit 1 family. In terms of assembly, NDH-1 is composed of 13 different subunits. Subunits NuoA, H, J, K, L, M, N constitute the membrane sector of the complex.

The protein localises to the cell inner membrane. It catalyses the reaction a quinone + NADH + 5 H(+)(in) = a quinol + NAD(+) + 4 H(+)(out). In terms of biological role, NDH-1 shuttles electrons from NADH, via FMN and iron-sulfur (Fe-S) centers, to quinones in the respiratory chain. The immediate electron acceptor for the enzyme in this species is believed to be ubiquinone. Couples the redox reaction to proton translocation (for every two electrons transferred, four hydrogen ions are translocated across the cytoplasmic membrane), and thus conserves the redox energy in a proton gradient. This subunit may bind ubiquinone. In Escherichia fergusonii (strain ATCC 35469 / DSM 13698 / CCUG 18766 / IAM 14443 / JCM 21226 / LMG 7866 / NBRC 102419 / NCTC 12128 / CDC 0568-73), this protein is NADH-quinone oxidoreductase subunit H.